The sequence spans 485 residues: GTPase Obg (485 aa).

An Obg domain is found at 1-159 (MKFVDEVRIF…LTLRLELKLL (159 aa)). In terms of domain architecture, OBG-type G spans 160–332 (ADVGLLGFPN…LMDSVAEVLF (173 aa)). GTP-binding positions include 166-173 (GFPNAGKS), 191-195 (FTTLV), 213-216 (DIPG), 284-287 (NKLD), and 313-315 (SCA). The Mg(2+) site is built by Ser-173 and Thr-193. 4 stretches are compositionally biased toward low complexity: residues 367–385 (AGAAAATKSATKKSAAAKK), 394–428 (RKAGAVAKTSAARKAGTAAAKKAPARKSGTAPVKK), 437–446 (RKSGTAPAKK), and 455–474 (RKSGSSGKAAAKKASAATKR). Residues 367–485 (AGAAAATKSA…PARKSGGGRS (119 aa)) form a disordered region.

It belongs to the TRAFAC class OBG-HflX-like GTPase superfamily. OBG GTPase family. As to quaternary structure, monomer. Mg(2+) serves as cofactor.

The protein localises to the cytoplasm. In terms of biological role, an essential GTPase which binds GTP, GDP and possibly (p)ppGpp with moderate affinity, with high nucleotide exchange rates and a fairly low GTP hydrolysis rate. Plays a role in control of the cell cycle, stress response, ribosome biogenesis and in those bacteria that undergo differentiation, in morphogenesis control. This is GTPase Obg from Myxococcus xanthus (strain DK1622).